Reading from the N-terminus, the 209-residue chain is Uridine kinase (209 aa).

Residue 12 to 19 participates in ATP binding; it reads GGSGGGKT.

It belongs to the uridine kinase family.

The protein resides in the cytoplasm. The enzyme catalyses uridine + ATP = UMP + ADP + H(+). It catalyses the reaction cytidine + ATP = CMP + ADP + H(+). The protein operates within pyrimidine metabolism; CTP biosynthesis via salvage pathway; CTP from cytidine: step 1/3. Its pathway is pyrimidine metabolism; UMP biosynthesis via salvage pathway; UMP from uridine: step 1/1. The chain is Uridine kinase from Streptococcus agalactiae serotype V (strain ATCC BAA-611 / 2603 V/R).